The primary structure comprises 515 residues: Bifunctional purine biosynthesis protein PurH (515 aa).

Positions M1 to V145 constitute an MGS-like domain.

Belongs to the PurH family.

The enzyme catalyses (6R)-10-formyltetrahydrofolate + 5-amino-1-(5-phospho-beta-D-ribosyl)imidazole-4-carboxamide = 5-formamido-1-(5-phospho-D-ribosyl)imidazole-4-carboxamide + (6S)-5,6,7,8-tetrahydrofolate. It carries out the reaction IMP + H2O = 5-formamido-1-(5-phospho-D-ribosyl)imidazole-4-carboxamide. It functions in the pathway purine metabolism; IMP biosynthesis via de novo pathway; 5-formamido-1-(5-phospho-D-ribosyl)imidazole-4-carboxamide from 5-amino-1-(5-phospho-D-ribosyl)imidazole-4-carboxamide (10-formyl THF route): step 1/1. Its pathway is purine metabolism; IMP biosynthesis via de novo pathway; IMP from 5-formamido-1-(5-phospho-D-ribosyl)imidazole-4-carboxamide: step 1/1. The chain is Bifunctional purine biosynthesis protein PurH from Streptococcus equi subsp. equi (strain 4047).